The following is a 653-amino-acid chain: Translation factor GUF1, mitochondrial (653 aa).

The region spanning 56 to 236 (ENYRNFSIVA…SIIKNIPAPN (181 aa)) is the tr-type G domain. GTP-binding positions include 65-72 (AHVDHGKS), 129-133 (DTPGH), and 183-186 (NKID).

This sequence belongs to the TRAFAC class translation factor GTPase superfamily. Classic translation factor GTPase family. LepA subfamily.

It localises to the mitochondrion inner membrane. The enzyme catalyses GTP + H2O = GDP + phosphate + H(+). Promotes mitochondrial protein synthesis. May act as a fidelity factor of the translation reaction, by catalyzing a one-codon backward translocation of tRNAs on improperly translocated ribosomes. Binds to mitochondrial ribosomes in a GTP-dependent manner. This chain is Translation factor GUF1, mitochondrial, found in Candida tropicalis (strain ATCC MYA-3404 / T1) (Yeast).